We begin with the raw amino-acid sequence, 349 residues long: uncharacterized protein (349 aa).

This is an uncharacterized protein from Ostreid herpesvirus 1 (isolate France) (OsHV-1).